Consider the following 1149-residue polypeptide: Potassium channel subfamily U member 1 (1149 aa).

The Extracellular portion of the chain corresponds to 1–24 (MFQTKLRNETWEDLPKMSCTTEIQ). The helical transmembrane segment at 25–45 (AAFILSSFVTFFSGLIILLIF) threads the bilayer. At 46-101 (RLIWRSVKKWQIIKGTGIILELFTSGTIARSHVRSLHFQGQFRDHIEMLLSAQTFV) the chain is on the cytoplasmic side. Residues 102–122 (GQVLVILVFVLSIGSLIIYFI) form a helical membrane-spanning segment. Topologically, residues 123 to 138 (NSADPVGSCSSYEDKT) are extracellular. Residues 139–159 (IPIDLVFNAFFSFYFGLRFMA) form a helical membrane-spanning segment. Topologically, residues 160 to 163 (ADDK) are cytoplasmic. A helical membrane pass occupies residues 164–184 (IKFWLEMNSIVDIFTIPPTFI). The Extracellular segment spans residues 185–188 (SYYL). The helical; Voltage-sensor transmembrane segment at 189–209 (KSNWLGLRFLRALRLLELPQI) threads the bilayer. Residues 210–226 (LQILRAIKTSNSVKFSK) are Cytoplasmic-facing. Residues 227–247 (LLSIILSTWFTAAGFIHLVEN) form a helical membrane-spanning segment. The Extracellular portion of the chain corresponds to 248–259 (SGDPWLKGRNSQ). An intramembrane region (pore-forming) is located at residues 260 to 282 (NISYFESIYLVMATTSTVGFGDV). Positions 276 to 279 (TVGF) match the Selectivity for potassium motif. Residues 283 to 291 (VAKTSLGRT) lie on the Extracellular side of the membrane. The helical transmembrane segment at 292-312 (FIMFFTLGSLILFANYIPEMV) threads the bilayer. Topologically, residues 313–1149 (ELFANKRKYT…EDPFAYSEPL (837 aa)) are cytoplasmic. 2 RCK N-terminal domains span residues 331-473 (KKFI…DNII) and 713-884 (RNHI…EGSL). 2 disordered regions span residues 828 to 854 (QIDS…NEKS) and 1118 to 1149 (SQIP…SEPL). Low complexity predominate over residues 830 to 840 (DSSSDPSPSVS). A compositionally biased stretch (basic and acidic residues) spans 1125-1135 (NAKENERKTSD).

It belongs to the potassium channel family. Calcium-activated (TC 1.A.1.3) subfamily. KCa5.1/KCNU1 sub-subfamily. As to quaternary structure, homotetramer; which constitutes the activated potassium channel. Interacts with LRRC52; this interaction changes channel gating properties, such as shifting gating to more negative potentials at a given pH. Testis-specific.

Its subcellular location is the cell membrane. The protein localises to the cell projection. It is found in the cilium. The protein resides in the flagellum membrane. It catalyses the reaction K(+)(in) = K(+)(out). Its activity is regulated as follows. Regulated by changes in cytosolic pH; activated by alkalization. Activated by intracellular Ca(2+). Despite strong sequence similarity, human KCNU1 channels are significantly more sensitive to activation by internal Ca(2+) and less pH-sensitive than mouse KCNU1. VU0546110 acts as a selective inhibitor. The auxiliary subunit LRRC52 shifts the activation of KCNU1 to more negative potentials at a given pH. In terms of biological role, testis-specific potassium channel activated by both intracellular pH and membrane voltage that mediates export of K(+). Represents the primary spermatozoan K(+) current. The channel underlies a pH-triggered membrane hyperpolarization during the process of sperm capacitation, as sperm encounter the alkaline environment near the ovum in the female reproductive tract, thereby playing an essential for male fertility. This chain is Potassium channel subfamily U member 1, found in Homo sapiens (Human).